The sequence spans 248 residues: MTEATRILLGVNIDHVATLRQARGTRYPDPVKAALDAEEAGADGITVHLREDRRHIQERDVRVLKEVLQTRMNFEMGVTEEMLAFAEEIRPAHSCLVPERREELTTEGGLDVAGQEQRIRDAVRRLAAVGSEVSLFIDPDPRQIEASARVGAPAIELHTGRYADAEDPEEQTRELQRVREGVALGRSLGLIVNAGHGLHYHNVEPVAAIDGINELNIGHAIVAHALFVGFRQAVAEMKALMLAAATKR.

Residue N12 participates in 3-amino-2-oxopropyl phosphate binding. 14–15 (DH) contributes to the 1-deoxy-D-xylulose 5-phosphate binding site. Position 23 (R23) interacts with 3-amino-2-oxopropyl phosphate. The active-site Proton acceptor is the H48. Positions 50 and 55 each coordinate 1-deoxy-D-xylulose 5-phosphate. E75 (proton acceptor) is an active-site residue. Position 105 (T105) interacts with 1-deoxy-D-xylulose 5-phosphate. Catalysis depends on H196, which acts as the Proton donor. 3-amino-2-oxopropyl phosphate is bound by residues G197 and 218-219 (GH).

It belongs to the PNP synthase family. As to quaternary structure, homooctamer; tetramer of dimers.

The protein localises to the cytoplasm. It catalyses the reaction 3-amino-2-oxopropyl phosphate + 1-deoxy-D-xylulose 5-phosphate = pyridoxine 5'-phosphate + phosphate + 2 H2O + H(+). It functions in the pathway cofactor biosynthesis; pyridoxine 5'-phosphate biosynthesis; pyridoxine 5'-phosphate from D-erythrose 4-phosphate: step 5/5. Catalyzes the complicated ring closure reaction between the two acyclic compounds 1-deoxy-D-xylulose-5-phosphate (DXP) and 3-amino-2-oxopropyl phosphate (1-amino-acetone-3-phosphate or AAP) to form pyridoxine 5'-phosphate (PNP) and inorganic phosphate. The sequence is that of Pyridoxine 5'-phosphate synthase from Pseudomonas aeruginosa (strain LESB58).